The sequence spans 874 residues: Leucine--tRNA ligase (874 aa).

A 'HIGH' region motif is present at residues 47 to 57 (PYPSGKLHMGH). Residues 636–640 (KMSKS) carry the 'KMSKS' region motif. Residue K639 coordinates ATP.

The protein belongs to the class-I aminoacyl-tRNA synthetase family.

Its subcellular location is the cytoplasm. The catalysed reaction is tRNA(Leu) + L-leucine + ATP = L-leucyl-tRNA(Leu) + AMP + diphosphate. In Acinetobacter baumannii (strain AB307-0294), this protein is Leucine--tRNA ligase.